Here is a 217-residue protein sequence, read N- to C-terminus: N-(5'-phosphoribosyl)anthranilate isomerase (217 aa).

This sequence belongs to the TrpF family.

The enzyme catalyses N-(5-phospho-beta-D-ribosyl)anthranilate = 1-(2-carboxyphenylamino)-1-deoxy-D-ribulose 5-phosphate. It functions in the pathway amino-acid biosynthesis; L-tryptophan biosynthesis; L-tryptophan from chorismate: step 3/5. The sequence is that of N-(5'-phosphoribosyl)anthranilate isomerase from Bacillus velezensis (strain DSM 23117 / BGSC 10A6 / LMG 26770 / FZB42) (Bacillus amyloliquefaciens subsp. plantarum).